A 259-amino-acid polypeptide reads, in one-letter code: Oxidase ustYb (259 aa).

A helical membrane pass occupies residues 36-56 (IIYTSLAFVGFIEILFFGIFF). N-linked (GlcNAc...) asparagine glycans are attached at residues Asn-102 and Asn-122. 2 short sequence motifs (HXXHC) span residues 147 to 151 (HQLHC) and 197 to 201 (HVDHC).

Belongs to the ustYa family.

Its subcellular location is the membrane. The protein operates within mycotoxin biosynthesis. Its function is as follows. Oxidase; part of the gene cluster that mediates the biosynthesis of the secondary metabolite ustiloxin B, an antimitotic tetrapeptide. First, ustA is processed by the subtilisin-like endoprotease Kex2 that is outside the ustiloxin B gene cluster, at the C-terminal side of Arg-Lys, after transfer to Golgi apparatus through the endoplasmic reticulum (ER). Cleavage by KEX2 generates 16 peptides YAIG-I to YAIG-XVI. To process the precursor peptide further, at least two peptidases are necessary to cleave the N-terminal and C-terminal sides of the Tyr-Ala-Ile-Gly core peptide which serves as backbone for the synthesis of ustiloxin B, through cyclization and modification of the tyrosine with a non-protein coding amino acid, norvaline. One of the two peptidases must be the serine peptidase ustP; and the other pepdidase is probably ustH. Macrocyclization of the core peptide derived from ustA requires the tyrosinase ustQ, as well as the homologous oxidases ustYa and ustYb, and leads to the production of the first cyclization product N-desmethylustiloxin F. For the formation of N-desmethylustiloxin F, three oxidation steps are required, hydroxylation at the benzylic position, hydroxylation at either the aromatic ring of Tyr or beta-position of Ile, and oxidative cyclization. UstQ may catalyze the oxidation of a phenol moiety, whereas the ustYa and ustYb are most likely responsible for the remaining two-step oxidations. N-desmethylustiloxin F is then methylated by ustM to yield ustiloxin F which in turn substrate of the cytochrome P450 monooxygenase ustC which catalyzes the formation of S-deoxyustiloxin H. The flavoprotein monooxygenases ustF1 and ustF2 then participate in the modification of the side chain of S-deoxyustiloxin H, leading to the synthesis of an oxime intermediate, via ustiloxin H. Finally, carboxylative dehydration performed by the cysteine desulfurase-like protein ustD yields ustiloxin B. The sequence is that of Oxidase ustYb from Aspergillus flavus (strain ATCC 200026 / FGSC A1120 / IAM 13836 / NRRL 3357 / JCM 12722 / SRRC 167).